A 142-amino-acid chain; its full sequence is Putative mating-type transcription factor (142 aa).

Its subcellular location is the nucleus. This Eremothecium gossypii (strain ATCC 10895 / CBS 109.51 / FGSC 9923 / NRRL Y-1056) (Yeast) protein is Putative mating-type transcription factor.